Reading from the N-terminus, the 254-residue chain is Molybdate-binding protein ModA (254 aa).

The N-terminal stretch at 1 to 24 is a signal peptide; it reads MKKLTKISTALLIAGLGFSFAASA. Residues Ser-33, Ser-61, Ala-146, Val-173, and Tyr-191 each contribute to the molybdate site.

This sequence belongs to the bacterial solute-binding protein ModA family. The complex is composed of two ATP-binding proteins (ModC), two transmembrane proteins (ModB) and a solute-binding protein (ModA).

It localises to the periplasm. Its function is as follows. Involved in the transport of molybdenum into the cell. This chain is Molybdate-binding protein ModA (modA), found in Haemophilus influenzae (strain ATCC 51907 / DSM 11121 / KW20 / Rd).